Here is a 173-residue protein sequence, read N- to C-terminus: Putative metal-dependent hydrolase BCE33L2441 (173 aa).

Positions 65, 156, and 160 each coordinate Zn(2+).

This sequence belongs to the metal hydrolase YfiT family. In terms of assembly, homodimer. Zn(2+) serves as cofactor.

The protein resides in the cytoplasm. Functionally, possible metal-dependent hydrolase. The polypeptide is Putative metal-dependent hydrolase BCE33L2441 (Bacillus cereus (strain ZK / E33L)).